We begin with the raw amino-acid sequence, 225 residues long: Small ribosomal subunit protein eS1 (225 aa).

Residues 206–216 (PVEEPAAEEVA) show a composition bias toward acidic residues. The tract at residues 206-225 (PVEEPAAEEVAEAPAAETQE) is disordered.

Belongs to the eukaryotic ribosomal protein eS1 family.

This chain is Small ribosomal subunit protein eS1, found in Methanococcus maripaludis (strain C5 / ATCC BAA-1333).